Reading from the N-terminus, the 95-residue chain is Co-chaperonin GroES (95 aa).

This sequence belongs to the GroES chaperonin family. Heptamer of 7 subunits arranged in a ring. Interacts with the chaperonin GroEL.

Its subcellular location is the cytoplasm. Together with the chaperonin GroEL, plays an essential role in assisting protein folding. The GroEL-GroES system forms a nano-cage that allows encapsulation of the non-native substrate proteins and provides a physical environment optimized to promote and accelerate protein folding. GroES binds to the apical surface of the GroEL ring, thereby capping the opening of the GroEL channel. The polypeptide is Co-chaperonin GroES (Chlorobium limicola (strain DSM 245 / NBRC 103803 / 6330)).